Here is a 174-residue protein sequence, read N- to C-terminus: Cytoglobin-1 (174 aa).

The region spanning 15-165 is the Globin domain; sequence SLTEEDVCVI…LYWQMNRVYA (151 aa). Positions 78 and 110 each coordinate heme b.

This sequence belongs to the globin family. In terms of assembly, monomeric. In terms of tissue distribution, expressed in all tissues examined with highest levels in brain, eye, gut and heart.

The protein localises to the cytoplasm. It localises to the nucleus. The enzyme catalyses Fe(II)-heme b-[protein] + nitric oxide + O2 = Fe(III)-heme b-[protein] + nitrate. It carries out the reaction Fe(III)-heme b-[protein] + nitric oxide + H2O = Fe(II)-heme b-[protein] + nitrite + 2 H(+). It catalyses the reaction 2 superoxide + 2 H(+) = H2O2 + O2. The catalysed reaction is H2O2 + AH2 = A + 2 H2O. Probable multifunctional globin with a hexacoordinated heme iron required for the catalysis of various reactions depending on redox condition of the cell as well as oxygen availability. Has a nitric oxide dioxygenase (NOD) activity and is most probably involved in cell-mediated and oxygen-dependent nitric oxide consumption. Under normoxic conditions functions as a nitric oxide dioxygenase (NOD) but under hypoxic conditions the globin may switch its function to that of a nitrite (NO2) reductase (NiR), generating nitric oxide. Could also have peroxidase and superoxide dismutase activities, detoxifying reactive oxygen species and protecting cells against oxidative stress. Also binds dioxygen with low affinity and could function as an oxygen sensor but has probably no function as a respiratory oxygen carrier. The chain is Cytoglobin-1 (cygb1) from Danio rerio (Zebrafish).